The following is a 343-amino-acid chain: Methionine synthase (343 aa).

Residues His-211, Cys-213, Glu-236, and Cys-315 each contribute to the Zn(2+) site.

This sequence belongs to the archaeal MetE family. Requires Zn(2+) as cofactor.

Its pathway is amino-acid biosynthesis; L-methionine biosynthesis via de novo pathway. Catalyzes the transfer of a methyl group to L-homocysteine resulting in methionine formation. The physiological methyl donor is unknown. The protein is Methionine synthase of Thermoplasma acidophilum (strain ATCC 25905 / DSM 1728 / JCM 9062 / NBRC 15155 / AMRC-C165).